A 569-amino-acid polypeptide reads, in one-letter code: IPGRTGRARAAVSVPPPAGEQVPTERLEPRVEERAGGYWVLKEKYRAGLNPQEKVKLEKEPMALFMEGGIQDLARVPMEQIDAAKLTKDDVDVRLKWLGLFHRRKHQYGRFMMRLKLPNGVTTSEQTRYLASVIEAYGADGCADVTTRQNWQIRGVTLPDVPAILDGLRAVGLTSLQSGMDNVRNPVGNPLAGVDPHEIVDTRPYTNLLSSYVTNNSQGNPTITNLPRKWNVCVIGSHDLYEHPHINDLAYMPAVKDGEFGFNLLVGGFISPKRWAEALPLDAWVAGDDVVPVCKAILEAYRDLGSRGNRQKTRMMWLIDELGMEVFRSEVEKRMPNGVLERAAPEDLVDKRWERRDYLGVHPQKQEGLSYVGLHVPVGRLQAADMFELARLADEYGTGELRLTVEQNIVLPNVSNERLDALLAEPLLQEQRLSPRPSMLLRGLVACTGNQFCGQAIIETKARALQVAREVEKRVAVPRPVRMHWTGCPNSCGQVQVADIGFMGCLTKDSDGKIVEAADIFVGGRVGSDSHLADVYRKSVPCKDLVPIVADLLVERFGAVPREREEDEE.

A chloroplast-targeting transit peptide spans 1-4 (IPGR). The segment at 1-28 (IPGRTGRARAAVSVPPPAGEQVPTERLE) is disordered. [4Fe-4S] cluster contacts are provided by Cys447, Cys453, Cys488, and Cys492. Cys492 serves as a coordination point for siroheme.

It belongs to the nitrite and sulfite reductase 4Fe-4S domain family. Monomer. The cofactor is siroheme. It depends on [4Fe-4S] cluster as a cofactor.

It is found in the plastid. It localises to the chloroplast. The enzyme catalyses 6 oxidized [2Fe-2S]-[ferredoxin] + NH4(+) + 2 H2O = nitrite + 6 reduced [2Fe-2S]-[ferredoxin] + 8 H(+). It participates in nitrogen metabolism; nitrate reduction (assimilation). The chain is Ferredoxin--nitrite reductase, chloroplastic (NIR) from Zea mays (Maize).